Consider the following 415-residue polypeptide: Gamma-glutamyl phosphate reductase (415 aa).

This sequence belongs to the gamma-glutamyl phosphate reductase family.

The protein resides in the cytoplasm. It carries out the reaction L-glutamate 5-semialdehyde + phosphate + NADP(+) = L-glutamyl 5-phosphate + NADPH + H(+). It functions in the pathway amino-acid biosynthesis; L-proline biosynthesis; L-glutamate 5-semialdehyde from L-glutamate: step 2/2. In terms of biological role, catalyzes the NADPH-dependent reduction of L-glutamate 5-phosphate into L-glutamate 5-semialdehyde and phosphate. The product spontaneously undergoes cyclization to form 1-pyrroline-5-carboxylate. The polypeptide is Gamma-glutamyl phosphate reductase (Clostridium perfringens (strain ATCC 13124 / DSM 756 / JCM 1290 / NCIMB 6125 / NCTC 8237 / Type A)).